A 347-amino-acid polypeptide reads, in one-letter code: Phenylalanine--tRNA ligase alpha subunit (347 aa).

E265 is a Mg(2+) binding site.

The protein belongs to the class-II aminoacyl-tRNA synthetase family. Phe-tRNA synthetase alpha subunit type 1 subfamily. Tetramer of two alpha and two beta subunits. Mg(2+) serves as cofactor.

It is found in the cytoplasm. It carries out the reaction tRNA(Phe) + L-phenylalanine + ATP = L-phenylalanyl-tRNA(Phe) + AMP + diphosphate + H(+). This is Phenylalanine--tRNA ligase alpha subunit from Wolbachia pipientis wMel.